The following is a 321-amino-acid chain: Holliday junction branch migration complex subunit RuvB (321 aa).

The interval 1–173 is large ATPase domain (RuvB-L); the sequence is MMMEQECVDD…FGIISRLEFY (173 aa). ATP-binding positions include Ile12, Arg13, Gly54, Lys57, Thr58, Thr59, 120-122, Arg163, Tyr173, and Arg210; that span reads EDF. Thr58 provides a ligand contact to Mg(2+). Residues 174 to 244 form a small ATPAse domain (RuvB-S) region; that stretch reads TPAELACIVK…LASDALARMD (71 aa). Residues 247 to 321 are head domain (RuvB-H); the sequence is ELGLDQMDRK…KAYRHMNLLA (75 aa). Residues Arg302 and Arg307 each coordinate DNA.

Belongs to the RuvB family. Homohexamer. Forms an RuvA(8)-RuvB(12)-Holliday junction (HJ) complex. HJ DNA is sandwiched between 2 RuvA tetramers; dsDNA enters through RuvA and exits via RuvB. An RuvB hexamer assembles on each DNA strand where it exits the tetramer. Each RuvB hexamer is contacted by two RuvA subunits (via domain III) on 2 adjacent RuvB subunits; this complex drives branch migration. In the full resolvosome a probable DNA-RuvA(4)-RuvB(12)-RuvC(2) complex forms which resolves the HJ.

The protein resides in the cytoplasm. It catalyses the reaction ATP + H2O = ADP + phosphate + H(+). Its function is as follows. The RuvA-RuvB-RuvC complex processes Holliday junction (HJ) DNA during genetic recombination and DNA repair, while the RuvA-RuvB complex plays an important role in the rescue of blocked DNA replication forks via replication fork reversal (RFR). RuvA specifically binds to HJ cruciform DNA, conferring on it an open structure. The RuvB hexamer acts as an ATP-dependent pump, pulling dsDNA into and through the RuvAB complex. RuvB forms 2 homohexamers on either side of HJ DNA bound by 1 or 2 RuvA tetramers; 4 subunits per hexamer contact DNA at a time. Coordinated motions by a converter formed by DNA-disengaged RuvB subunits stimulates ATP hydrolysis and nucleotide exchange. Immobilization of the converter enables RuvB to convert the ATP-contained energy into a lever motion, pulling 2 nucleotides of DNA out of the RuvA tetramer per ATP hydrolyzed, thus driving DNA branch migration. The RuvB motors rotate together with the DNA substrate, which together with the progressing nucleotide cycle form the mechanistic basis for DNA recombination by continuous HJ branch migration. Branch migration allows RuvC to scan DNA until it finds its consensus sequence, where it cleaves and resolves cruciform DNA. The sequence is that of Holliday junction branch migration complex subunit RuvB from Oleidesulfovibrio alaskensis (strain ATCC BAA-1058 / DSM 17464 / G20) (Desulfovibrio alaskensis).